Reading from the N-terminus, the 149-residue chain is Calmodulin-1 (149 aa).

Position 2 is an N-acetylalanine (A2). 4 EF-hand domains span residues 8 to 43, 44 to 79, 81 to 116, and 117 to 149; these read DQIA…LGQN, PTEA…KMKD, DSEE…LGEK, and LTDE…MMAK. 14 residues coordinate Ca(2+): D21, D23, D25, C27, E32, D57, D59, N61, T63, E68, D94, D96, N98, and E105. Residue K116 is modified to N6,N6,N6-trimethyllysine. Positions 130, 132, 134, 136, and 141 each coordinate Ca(2+).

Belongs to the calmodulin family.

Its function is as follows. Calmodulin mediates the control of a large number of enzymes, ion channels and other proteins by Ca(2+). Among the enzymes to be stimulated by the calmodulin-Ca(2+) complex are a number of protein kinases and phosphatases. In Oryza sativa subsp. indica (Rice), this protein is Calmodulin-1 (CAM1-1).